The sequence spans 273 residues: Nitrogenase iron protein (273 aa).

8–15 (GKGGIGKS) provides a ligand contact to ATP. A [4Fe-4S] cluster-binding site is contributed by C95. An ADP-ribosylarginine; by dinitrogenase reductase ADP-ribosyltransferase modification is found at R98. [4Fe-4S] cluster is bound at residue C130.

Belongs to the NifH/BchL/ChlL family. In terms of assembly, homodimer. The cofactor is [4Fe-4S] cluster. Post-translationally, the reversible ADP-ribosylation of Arg-98 inactivates the nitrogenase reductase and regulates nitrogenase activity.

It carries out the reaction N2 + 8 reduced [2Fe-2S]-[ferredoxin] + 16 ATP + 16 H2O = H2 + 8 oxidized [2Fe-2S]-[ferredoxin] + 2 NH4(+) + 16 ADP + 16 phosphate + 6 H(+). In terms of biological role, the key enzymatic reactions in nitrogen fixation are catalyzed by the nitrogenase complex, which has 2 components: the iron protein and the molybdenum-iron protein. The protein is Nitrogenase iron protein of Roseiflexus sp. (strain RS-1).